We begin with the raw amino-acid sequence, 263 residues long: MEGGFTGGDEYQKHFLPRDYLNTYYSFQSGPSPEAEMLKFNLECLHKTFGPGGLQGDTLIDIGSGPTIYQVLAACESFKDITLSDFTDRNREELAKWLKKEPGAYDWTPALKFACELEGNSGRWQEKAEKLRATVKRVLKCDANLSNPLTPVVLPPADCVLTLLAMECACCSLDAYRAALRNLASLLKPGGHLVTTVTLQLSSYMVGEREFSCVALEKEEVEQAVLDAGFDIEQLLYSPQSYSASTAPNRGVCFLVARKKPGS.

Residue Lys13 is modified to N6-succinyllysine. Residues Tyr20, Tyr25, 63–64 (GS), Tyr69, Asp85, and Asn90 contribute to the S-adenosyl-L-methionine site. The residue at position 96 (Lys96) is an N6-succinyllysine. Residues 142 to 143 (DA) and Leu163 each bind S-adenosyl-L-methionine.

Belongs to the class I-like SAM-binding methyltransferase superfamily. NNMT/PNMT/TEMT family. Monomer. Highly expressed in lung, also detected in liver and at very low levels in brain.

It is found in the cytoplasm. The catalysed reaction is a tertiary amine + S-adenosyl-L-methionine = a methylated tertiary amine + S-adenosyl-L-homocysteine + H(+). It catalyses the reaction a secondary amine + S-adenosyl-L-methionine = a methylated secondary amine + S-adenosyl-L-homocysteine + H(+). It carries out the reaction a primary amine + S-adenosyl-L-methionine = a methylated primary amine + S-adenosyl-L-homocysteine + H(+). The enzyme catalyses dimethyl sulfide + S-adenosyl-L-methionine = trimethylsulfonium + S-adenosyl-L-homocysteine. Functionally, catalyzes the N-methylation of tryptamine and structurally related compounds. Functions as a thioether S-methyltransferase and is active with a variety of thioethers and the corresponding selenium and tellurium compounds, including 3-methylthiopropionaldehyde, dimethyl selenide, dimethyl telluride, 2-methylthioethylamine, 2-methylthioethanol, methyl-n-propyl sulfide and diethyl sulfide. Plays an important role in the detoxification of selenium compounds. The protein is Indolethylamine N-methyltransferase (INMT) of Oryctolagus cuniculus (Rabbit).